We begin with the raw amino-acid sequence, 339 residues long: tRNA dimethylallyltransferase (339 aa).

36–43 (GPTGSGKT) is a binding site for ATP. Position 38-43 (38-43 (TGSGKT)) interacts with substrate. An interaction with substrate tRNA region spans residues 61–64 (DSMQ).

This sequence belongs to the IPP transferase family. Monomer. Mg(2+) is required as a cofactor.

The enzyme catalyses adenosine(37) in tRNA + dimethylallyl diphosphate = N(6)-dimethylallyladenosine(37) in tRNA + diphosphate. Functionally, catalyzes the transfer of a dimethylallyl group onto the adenine at position 37 in tRNAs that read codons beginning with uridine, leading to the formation of N6-(dimethylallyl)adenosine (i(6)A). The protein is tRNA dimethylallyltransferase of Chlamydia trachomatis serovar L2 (strain ATCC VR-902B / DSM 19102 / 434/Bu).